A 756-amino-acid chain; its full sequence is 5-methyltetrahydropteroyltriglutamate--homocysteine methyltransferase (756 aa).

5-methyltetrahydropteroyltri-L-glutamate-binding positions include 16 to 19 and lysine 112; that span reads RELK. L-homocysteine is bound by residues 432 to 434 and glutamate 485; that span reads IGS. L-methionine is bound by residues 432–434 and glutamate 485; that span reads IGS. 5-methyltetrahydropteroyltri-L-glutamate-binding positions include 516 to 517 and tryptophan 562; that span reads RC. Position 600 (aspartate 600) interacts with L-homocysteine. Aspartate 600 contributes to the L-methionine binding site. A 5-methyltetrahydropteroyltri-L-glutamate-binding site is contributed by glutamate 606. Residues histidine 642, cysteine 644, and glutamate 666 each coordinate Zn(2+). Histidine 695 (proton donor) is an active-site residue. A Zn(2+)-binding site is contributed by cysteine 727.

This sequence belongs to the vitamin-B12 independent methionine synthase family. It depends on Zn(2+) as a cofactor.

It catalyses the reaction 5-methyltetrahydropteroyltri-L-glutamate + L-homocysteine = tetrahydropteroyltri-L-glutamate + L-methionine. It participates in amino-acid biosynthesis; L-methionine biosynthesis via de novo pathway; L-methionine from L-homocysteine (MetE route): step 1/1. Catalyzes the transfer of a methyl group from 5-methyltetrahydrofolate to homocysteine resulting in methionine formation. The sequence is that of 5-methyltetrahydropteroyltriglutamate--homocysteine methyltransferase from Haemophilus influenzae (strain ATCC 51907 / DSM 11121 / KW20 / Rd).